The sequence spans 383 residues: Protein COS5 (383 aa).

Topologically, residues 1–42 are cytoplasmic; that stretch reads MKENELKNEKSVDVLSFKQLESQKIVLPQDLFRSSFTWFCYE. Residues 43–63 traverse the membrane as a helical segment; that stretch reads IYKSLAFPIWMLLWLPLSVWW. Residues 64–72 lie on the Extracellular side of the membrane; the sequence is KLSNNCIYP. The chain crosses the membrane as a helical span at residues 73-93; sequence LIVSLLVLFLGPIFVLVICGL. The Cytoplasmic portion of the chain corresponds to 94–232; the sequence is SRKRSLSKQL…RSKLTWFLKR (139 aa). The helical transmembrane segment at 233-253 threads the bilayer; that stretch reads IFTIYSLPLWLAFLNCICVSQ. A topological domain (extracellular) is located at residue His254. The helical transmembrane segment at 255–275 threads the bilayer; that stretch reads FCLAFRILCPGLFFLMMVWLF. At 276-383 the chain is on the cytoplasmic side; that stretch reads QNMRTTALLV…SRNEESLMKK (108 aa).

Belongs to the DUP/COS family.

It is found in the membrane. This Saccharomyces cerevisiae (strain ATCC 204508 / S288c) (Baker's yeast) protein is Protein COS5 (COS5).